A 400-amino-acid chain; its full sequence is Argininosuccinate synthase (400 aa).

ATP contacts are provided by residues 10-18 and A38; that span reads AYSGGVDTS. Y89 is a binding site for L-citrulline. An ATP-binding site is contributed by G119. L-aspartate is bound by residues T121, N125, and D126. An L-citrulline-binding site is contributed by N125. L-citrulline-binding residues include R129, S177, S186, E262, and Y274.

It belongs to the argininosuccinate synthase family. Type 1 subfamily. Homotetramer.

Its subcellular location is the cytoplasm. It catalyses the reaction L-citrulline + L-aspartate + ATP = 2-(N(omega)-L-arginino)succinate + AMP + diphosphate + H(+). The protein operates within amino-acid biosynthesis; L-arginine biosynthesis; L-arginine from L-ornithine and carbamoyl phosphate: step 2/3. The polypeptide is Argininosuccinate synthase (Nostoc punctiforme (strain ATCC 29133 / PCC 73102)).